Reading from the N-terminus, the 633-residue chain is Putative serine/threonine-protein kinase L232 (633 aa).

The region spanning 10–314 (YTIVDKLSEG…QSRKLFYEIL (305 aa)) is the Protein kinase domain. Residues 16–24 (LSEGTYGIV) and K39 each bind ATP. D133 (proton acceptor) is an active-site residue.

The protein belongs to the protein kinase superfamily. Ser/Thr protein kinase family.

The catalysed reaction is L-seryl-[protein] + ATP = O-phospho-L-seryl-[protein] + ADP + H(+). It carries out the reaction L-threonyl-[protein] + ATP = O-phospho-L-threonyl-[protein] + ADP + H(+). In Acanthamoeba polyphaga mimivirus (APMV), this protein is Putative serine/threonine-protein kinase L232.